The sequence spans 216 residues: Large ribosomal subunit protein uL3 (216 aa).

The tract at residues 136-155 (GVSISHRSHGSTGQRQDPGK) is disordered. Glutamine 151 is subject to N5-methylglutamine.

The protein belongs to the universal ribosomal protein uL3 family. In terms of assembly, part of the 50S ribosomal subunit. Forms a cluster with proteins L14 and L19. Post-translationally, methylated by PrmB.

In terms of biological role, one of the primary rRNA binding proteins, it binds directly near the 3'-end of the 23S rRNA, where it nucleates assembly of the 50S subunit. The sequence is that of Large ribosomal subunit protein uL3 from Rickettsia prowazekii (strain Madrid E).